Here is a 329-residue protein sequence, read N- to C-terminus: Beta-ketoacyl-[acyl-carrier-protein] synthase III (329 aa).

Residues Cys-113 and His-255 contribute to the active site. Residues 256–260 form an ACP-binding region; the sequence is QANQR. Residue Asn-285 is part of the active site.

Belongs to the thiolase-like superfamily. FabH family. In terms of assembly, homodimer.

It is found in the cytoplasm. It carries out the reaction malonyl-[ACP] + acetyl-CoA + H(+) = 3-oxobutanoyl-[ACP] + CO2 + CoA. The protein operates within lipid metabolism; fatty acid biosynthesis. Its function is as follows. Catalyzes the condensation reaction of fatty acid synthesis by the addition to an acyl acceptor of two carbons from malonyl-ACP. Catalyzes the first condensation reaction which initiates fatty acid synthesis and may therefore play a role in governing the total rate of fatty acid production. Possesses both acetoacetyl-ACP synthase and acetyl transacylase activities. Its substrate specificity determines the biosynthesis of branched-chain and/or straight-chain of fatty acids. In Chlorobaculum tepidum (strain ATCC 49652 / DSM 12025 / NBRC 103806 / TLS) (Chlorobium tepidum), this protein is Beta-ketoacyl-[acyl-carrier-protein] synthase III.